The primary structure comprises 453 residues: Bifunctional protein GlmU (453 aa).

A pyrophosphorylase region spans residues 1–225; it reads MNIVILAAGT…EWETLGVNSK (225 aa). Residues 6–9, K20, Q71, 76–77, 98–100, G135, E150, N165, and N223 contribute to the UDP-N-acetyl-alpha-D-glucosamine site; these read LAAG, GT, and YGD. Residue D100 participates in Mg(2+) binding. N223 contacts Mg(2+). The tract at residues 226–246 is linker; it reads QQLAELERIHQRNVADDLLVA. An N-acetyltransferase region spans residues 247-453; sequence GVTIADPARI…GYVRPTKKKS (207 aa). The UDP-N-acetyl-alpha-D-glucosamine site is built by R329 and K347. The active-site Proton acceptor is the H359. Residues Y362 and N373 each contribute to the UDP-N-acetyl-alpha-D-glucosamine site. Acetyl-CoA contacts are provided by residues A376, 382 to 383, S401, and A419; that span reads NY.

It in the N-terminal section; belongs to the N-acetylglucosamine-1-phosphate uridyltransferase family. This sequence in the C-terminal section; belongs to the transferase hexapeptide repeat family. Homotrimer. It depends on Mg(2+) as a cofactor.

The protein resides in the cytoplasm. The catalysed reaction is alpha-D-glucosamine 1-phosphate + acetyl-CoA = N-acetyl-alpha-D-glucosamine 1-phosphate + CoA + H(+). It catalyses the reaction N-acetyl-alpha-D-glucosamine 1-phosphate + UTP + H(+) = UDP-N-acetyl-alpha-D-glucosamine + diphosphate. It functions in the pathway nucleotide-sugar biosynthesis; UDP-N-acetyl-alpha-D-glucosamine biosynthesis; N-acetyl-alpha-D-glucosamine 1-phosphate from alpha-D-glucosamine 6-phosphate (route II): step 2/2. Its pathway is nucleotide-sugar biosynthesis; UDP-N-acetyl-alpha-D-glucosamine biosynthesis; UDP-N-acetyl-alpha-D-glucosamine from N-acetyl-alpha-D-glucosamine 1-phosphate: step 1/1. It participates in bacterial outer membrane biogenesis; LPS lipid A biosynthesis. Its function is as follows. Catalyzes the last two sequential reactions in the de novo biosynthetic pathway for UDP-N-acetylglucosamine (UDP-GlcNAc). The C-terminal domain catalyzes the transfer of acetyl group from acetyl coenzyme A to glucosamine-1-phosphate (GlcN-1-P) to produce N-acetylglucosamine-1-phosphate (GlcNAc-1-P), which is converted into UDP-GlcNAc by the transfer of uridine 5-monophosphate (from uridine 5-triphosphate), a reaction catalyzed by the N-terminal domain. This chain is Bifunctional protein GlmU, found in Paraburkholderia phymatum (strain DSM 17167 / CIP 108236 / LMG 21445 / STM815) (Burkholderia phymatum).